A 738-amino-acid chain; its full sequence is MATKFPSFSQGLAQDPTTRRIWYGIATAHDFESHDGMTEEKLYQKLFSTHFGHLAIIGLWVSGNLFHIAWQGNFEQWVADPLHVRPIAHAIWDPHFGQGAIDAFTQAGASSPVNIAYSGLYHWFYTIGMTTNAELYQGSIFMMILSAWALFAGWLHLQPKFRPSLAWFKNAESRLNHHLAVLFGFSSIAWTGHLVHVAIPESRGQHVGWDNFLNVMPHPAGLGPFFTGNWGVYAQNPDTMGQVFGSAEGSGTAILTFLGGFHPQTEALWLTDIAHHHLAIGVIFVIAGHMYRTNFGIGHSIREILEAHNPPQGTPGDLGAGHKGLYDTINNSLHFQLGLALASLGVVTSLVAQHMYAMPSYAFIAKDYTTQAALYTHHQYIAIFLMCGAFAHGAIFFIRDYDPEANKDNVLARMLEHKEAIISHLSWVSLFLGFHTLGLYVHNDVVVAFGTPEKQILVEPVFAQFVQAASGKAIYGFDVLLANTGGVAANANAAYMGGWMDAINGVRGSNDLFLPIGPGDFLVHHAIALGLHTTTLILVKGALDARGSKLMPDKKDFGYSFPCDGPGRGGTCDISAWDAFYLAVFWALNTVGWVTFYWHWKHLAIWQGNVAQFNESSTYLMGWFRDYLWLNSSQLINGYNPFGSNNLAVWAWMFLFGHLVWATGFMFLISWRGYWQELIETIVWAHQRTPLANLVGWRDKPVALSIVQARVVGLAHFTIGYILTYAAFLIASTSGKFG.

The next 8 helical transmembrane spans lie at 46–69 (LFSTHFGHLAIIGLWVSGNLFHIA), 135–158 (LYQGSIFMMILSAWALFAGWLHLQ), 175–199 (LNHHLAVLFGFSSIAWTGHLVHVAI), 273–291 (IAHHHLAIGVIFVIAGHMY), 333–356 (LHFQLGLALASLGVVTSLVAQHMY), 372–398 (AALYTHHQYIAIFLMCGAFAHGAIFFI), 420–442 (AIISHLSWVSLFLGFHTLGLYVH), and 521–539 (FLVHHAIALGLHTTTLILV). Residues cysteine 563 and cysteine 572 each contribute to the [4Fe-4S] cluster site. The next 2 membrane-spanning stretches (helical) occupy residues 579–600 (AFYLAVFWALNTVGWVTFYWHW) and 647–669 (LAVWAWMFLFGHLVWATGFMFLI). Chlorophyll a-binding residues include histidine 658, methionine 666, and tyrosine 674. Residue tryptophan 675 participates in phylloquinone binding. A helical membrane pass occupies residues 711 to 731 (VVGLAHFTIGYILTYAAFLIA).

It belongs to the PsaA/PsaB family. As to quaternary structure, the PsaA/B heterodimer binds the P700 chlorophyll special pair and subsequent electron acceptors. PSI consists of a core antenna complex that captures photons, and an electron transfer chain that converts photonic excitation into a charge separation. The cyanobacterial PSI reaction center is composed of one copy each of PsaA,B,C,D,E,F,I,J,K,L,M and X, and forms trimeric complexes. It depends on PSI electron transfer chain: 5 chlorophyll a, 1 chlorophyll a', 2 phylloquinones and 3 4Fe-4S clusters. PSI core antenna: 90 chlorophyll a, 22 carotenoids, 3 phospholipids and 1 galactolipid. P700 is a chlorophyll a/chlorophyll a' dimer, A0 is one or more chlorophyll a, A1 is one or both phylloquinones and FX is a shared 4Fe-4S iron-sulfur center. as a cofactor.

The protein resides in the cellular thylakoid membrane. It carries out the reaction reduced [plastocyanin] + hnu + oxidized [2Fe-2S]-[ferredoxin] = oxidized [plastocyanin] + reduced [2Fe-2S]-[ferredoxin]. In terms of biological role, psaA and PsaB bind P700, the primary electron donor of photosystem I (PSI), as well as the electron acceptors A0, A1 and FX. PSI is a plastocyanin/cytochrome c6-ferredoxin oxidoreductase, converting photonic excitation into a charge separation, which transfers an electron from the donor P700 chlorophyll pair to the spectroscopically characterized acceptors A0, A1, FX, FA and FB in turn. Oxidized P700 is reduced on the lumenal side of the thylakoid membrane by plastocyanin or cytochrome c6. This is Photosystem I P700 chlorophyll a apoprotein A2 from Synechococcus sp. (strain WH7803).